A 204-amino-acid chain; its full sequence is Cytochrome b6 (204 aa).

The chain crosses the membrane as a helical span at residues 23–43 (YCLGGITLTSFLVQVATGSAM). Cys24 contributes to the heme c binding site. Residues His75 and His89 each coordinate heme b. 3 consecutive transmembrane segments (helical) span residues 81–101 (MMVLMMILHVFRVYLTGGFKK), 107–127 (WVTGVILGVLTVSFGVTGYSL), and 136–157 (AVKIVTGVPEAIPVIGSPLVEL). The heme b site is built by His176 and His191. Residues 177–197 (TFILPLLTAVFMPMHFLMIRK) form a helical membrane-spanning segment.

The protein belongs to the cytochrome b family. PetB subfamily. As to quaternary structure, the 4 large subunits of the cytochrome b6-f complex are cytochrome b6, subunit IV (17 kDa polypeptide, PetD), cytochrome f and the Rieske protein, while the 4 small subunits are PetG, PetL, PetM and PetN. The complex functions as a dimer. Heme b serves as cofactor. The cofactor is heme c.

The protein resides in the plastid. The protein localises to the chloroplast thylakoid membrane. In terms of biological role, component of the cytochrome b6-f complex, which mediates electron transfer between photosystem II (PSII) and photosystem I (PSI), cyclic electron flow around PSI, and state transitions. The chain is Cytochrome b6 from Picea abies (Norway spruce).